Consider the following 348-residue polypeptide: Phosphoribosylformylglycinamidine cyclo-ligase (348 aa).

The protein belongs to the AIR synthase family.

The protein localises to the cytoplasm. It catalyses the reaction 2-formamido-N(1)-(5-O-phospho-beta-D-ribosyl)acetamidine + ATP = 5-amino-1-(5-phospho-beta-D-ribosyl)imidazole + ADP + phosphate + H(+). Its pathway is purine metabolism; IMP biosynthesis via de novo pathway; 5-amino-1-(5-phospho-D-ribosyl)imidazole from N(2)-formyl-N(1)-(5-phospho-D-ribosyl)glycinamide: step 2/2. In Geotalea uraniireducens (strain Rf4) (Geobacter uraniireducens), this protein is Phosphoribosylformylglycinamidine cyclo-ligase.